The chain runs to 131 residues: Profilin-8 (131 aa).

Cysteines 13 and 115 form a disulfide. The Involved in PIP2 interaction motif lies at 81–97 (AVIRGKKGAGGITIKKT). The residue at position 111 (threonine 111) is a Phosphothreonine.

This sequence belongs to the profilin family. In terms of assembly, occurs in many kinds of cells as a complex with monomeric actin in a 1:1 ratio. Post-translationally, phosphorylated by MAP kinases.

It localises to the cytoplasm. Its subcellular location is the cytoskeleton. Binds to actin and affects the structure of the cytoskeleton. At high concentrations, profilin prevents the polymerization of actin, whereas it enhances it at low concentrations. This is Profilin-8 from Phleum pratense (Common timothy).